A 200-amino-acid chain; its full sequence is BREX protein BrxB (200 aa).

It belongs to the BrxB family.

Functionally, BREX systems (bacteriophage exclusion) provide immunity against bacteriophage. Part of a type 1 BREX system which protects against dsDNA phage. This system allows phage adsorption but prevents phage DNA replication, without degradation of the phage DNA. Methylation of bacterial DNA by PglX guides self/non-self discrimination. When the brxA-brxB-brxC-pglX-pglZ-brxL genes are transformed into a susceptible E.coli strain (BW25113) they confer very high resistance to infection by bacteriophage VR7 and VpaE1, about 100-fold protection against lambda, T5 and T7 and no protection against RNA phage Qbeta, ssDNA phage M13 or dSDNA phage T4 and VR5. Glycosylated phage DNA is not susceptible to BREX. The BREX system does not confer resistance to lysogenic lambda phage, i.e. prophage that are integrated into the chromosomal DNA and then induced to form phage. This Escherichia coli O9:H4 (strain HS) protein is BREX protein BrxB.